The sequence spans 205 residues: Large ribosomal subunit protein uL4 (205 aa).

A disordered region spans residues 56–78 (VSGTTAKPYRQKHTGRARQGSLR).

Belongs to the universal ribosomal protein uL4 family. As to quaternary structure, part of the 50S ribosomal subunit.

In terms of biological role, one of the primary rRNA binding proteins, this protein initially binds near the 5'-end of the 23S rRNA. It is important during the early stages of 50S assembly. It makes multiple contacts with different domains of the 23S rRNA in the assembled 50S subunit and ribosome. Forms part of the polypeptide exit tunnel. This Ehrlichia ruminantium (strain Gardel) protein is Large ribosomal subunit protein uL4.